A 178-amino-acid polypeptide reads, in one-letter code: Gamma-crystallin S (178 aa).

Residue Ser-2 is modified to N-acetylserine. Positions 2–5 are N-terminal arm; the sequence is SKTG. Beta/gamma crystallin 'Greek key' domains follow at residues 6–44 and 45–87; these read TKIT…KVEG and GTWA…RAVH. The connecting peptide stretch occupies residues 88–93; it reads LPSGGQ. Beta/gamma crystallin 'Greek key' domains follow at residues 94–134 and 135–177; these read YKIQ…KVLE and GVWI…RRIV.

This sequence belongs to the beta/gamma-crystallin family. In terms of assembly, monomer.

Crystallins are the dominant structural components of the vertebrate eye lens. The chain is Gamma-crystallin S (CRYGS) from Homo sapiens (Human).